A 178-amino-acid chain; its full sequence is Large ribosomal subunit protein uL10 (178 aa).

The protein belongs to the universal ribosomal protein uL10 family. As to quaternary structure, part of the ribosomal stalk of the 50S ribosomal subunit. The N-terminus interacts with L11 and the large rRNA to form the base of the stalk. The C-terminus forms an elongated spine to which L12 dimers bind in a sequential fashion forming a multimeric L10(L12)X complex.

Functionally, forms part of the ribosomal stalk, playing a central role in the interaction of the ribosome with GTP-bound translation factors. This Petrotoga mobilis (strain DSM 10674 / SJ95) protein is Large ribosomal subunit protein uL10.